The sequence spans 1034 residues: Glycine dehydrogenase (decarboxylating), mitochondrial (1034 aa).

A mitochondrion-targeting transit peptide spans Met-1–Thr-63. At Lys-770 the chain carries N6-(pyridoxal phosphate)lysine.

This sequence belongs to the GcvP family. Homodimer. The glycine cleavage system is composed of four proteins: P, T, L and H. Requires pyridoxal 5'-phosphate as cofactor.

The protein resides in the mitochondrion. The catalysed reaction is N(6)-[(R)-lipoyl]-L-lysyl-[glycine-cleavage complex H protein] + glycine + H(+) = N(6)-[(R)-S(8)-aminomethyldihydrolipoyl]-L-lysyl-[glycine-cleavage complex H protein] + CO2. Functionally, the glycine cleavage system catalyzes the degradation of glycine. The P protein binds the alpha-amino group of glycine through its pyridoxal phosphate cofactor; CO(2) is released and the remaining methylamine moiety is then transferred to the lipoamide cofactor of the H protein. This Flaveria trinervia (Clustered yellowtops) protein is Glycine dehydrogenase (decarboxylating), mitochondrial (GDCSPA).